The chain runs to 472 residues: Uronate isomerase (472 aa).

Belongs to the metallo-dependent hydrolases superfamily. Uronate isomerase family.

The catalysed reaction is D-glucuronate = D-fructuronate. The enzyme catalyses aldehydo-D-galacturonate = keto-D-tagaturonate. It functions in the pathway carbohydrate metabolism; pentose and glucuronate interconversion. This Oceanobacillus iheyensis (strain DSM 14371 / CIP 107618 / JCM 11309 / KCTC 3954 / HTE831) protein is Uronate isomerase.